The chain runs to 955 residues: Disintegrin and metalloproteinase domain-containing protein 19 (955 aa).

The first 25 residues, Met1–Ala25, serve as a signal peptide directing secretion. Residues Arg26 to Lys202 constitute a propeptide that is removed on maturation. The short motif at Ser130–Gly137 is the Cysteine switch element. Cys132 contributes to the Zn(2+) binding site. Asn144 carries an N-linked (GlcNAc...) asparagine glycan. Topologically, residues Arg203–Ser699 are extracellular. One can recognise a Peptidase M12B domain in the interval Lys210–Pro408. Intrachain disulfides connect Cys320–Cys403, Cys360–Cys387, and Cys361–Cys370. His345 is a binding site for Zn(2+). Residue Glu346 is part of the active site. Positions 349 and 355 each coordinate Zn(2+). Residues Gly416–Asp502 enclose the Disintegrin domain. N-linked (GlcNAc...) asparagine glycans are attached at residues Asn444 and Asn447. A disulfide bridge links Cys474 with Cys494. Asn645 carries N-linked (GlcNAc...) asparagine glycosylation. An EGF-like domain is found at Glu650 to Asn682. 3 disulfides stabilise this stretch: Cys654/Cys664, Cys658/Cys670, and Cys672/Cys681. The chain crosses the membrane as a helical span at residues Val700 to Met720. At Tyr721–Ala955 the chain is on the cytoplasmic side. Residues Ser753–Gln771 are compositionally biased toward polar residues. The tract at residues Ser753–Leu917 is disordered. Composition is skewed to pro residues over residues Ser787–Asp796 and Arg833–Pro844. Positions Arg833 to Pro844 match the SH3-binding motif.

Interacts with SH3PXD2A. Zn(2+) serves as cofactor. In terms of processing, the precursor is cleaved by a furin endopeptidase. In terms of tissue distribution, expressed in many normal organ tissues and several cancer cell lines.

It is found in the membrane. In terms of biological role, participates in the proteolytic processing of beta-type neuregulin isoforms which are involved in neurogenesis and synaptogenesis, suggesting a regulatory role in glial cell. Also cleaves alpha-2 macroglobulin. May be involved in osteoblast differentiation and/or osteoblast activity in bone. This is Disintegrin and metalloproteinase domain-containing protein 19 (ADAM19) from Homo sapiens (Human).